We begin with the raw amino-acid sequence, 762 residues long: Endothelin-converting enzyme 1 (762 aa).

Over 1 to 60 the chain is Cytoplasmic; that stretch reads MGSLRPPQGLGLQWSSFFLGKKGPGLTVSLPLLASSLQVNFRSPRSGQRCWAARTSVEKR. Residues 61–81 form a helical; Signal-anchor for type II membrane protein membrane-spanning segment; the sequence is LVVLVTLLAAGLVACLAALGI. Residues 82 to 762 are Extracellular-facing; the sequence is QYRTRTPPVC…MNPRHKCEVW (681 aa). The region spanning 90–762 is the Peptidase M13 domain; the sequence is VCLTEACVSV…MNPRHKCEVW (673 aa). Intrachain disulfides connect Cys-91–Cys-96, Cys-114–Cys-747, Cys-122–Cys-707, Cys-177–Cys-427, and Cys-636–Cys-759. N-linked (GlcNAc...) asparagine glycans are attached at residues Asn-158, Asn-179, Asn-202, Asn-262, Asn-308, Asn-354, Asn-375, and Asn-531. A Zn(2+)-binding site is contributed by His-599. The active site involves Glu-600. His-603 provides a ligand contact to Zn(2+). 2 N-linked (GlcNAc...) asparagine glycosylation sites follow: Asn-624 and Asn-643. Glu-659 is a Zn(2+) binding site. The active-site Proton donor is Asp-663.

This sequence belongs to the peptidase M13 family. Homodimer; disulfide-linked. Interacts with PPP1R16B. Interacts with TSPAN8; this interaction recruits the endothelin converting enzyme ECE1 to tetraspanin-enriched microdomains and positively modulates its enzymatic activity. Zn(2+) serves as cofactor. As to expression, all isoforms are expressed in aortic endothelial cells. Isoform A is also expressed in liver; isoform B in smooth muscle cells and fibroblasts; isoform C in aortic endothelial cells, smooth muscle cells, fibroblasts, liver and lung, and isoform D in smooth muscle cells.

The protein localises to the cell membrane. It carries out the reaction Hydrolysis of the 21-Trp-|-Val-22 bond in big endothelin to form endothelin 1.. Its activity is regulated as follows. Inhibited by phosphoramidon. Converts big endothelin-1 to endothelin-1. This is Endothelin-converting enzyme 1 (Ece1) from Rattus norvegicus (Rat).